We begin with the raw amino-acid sequence, 692 residues long: Highly divergent homeobox (692 aa).

The segment at residues 3 to 63 (LRSVFTVEQQ…NKRRKMSSKS (61 aa)) is a DNA-binding region (homeobox 1). Polar residues predominate over residues 117 to 133 (SSSSKQGTTKHTNTQIT). A disordered region spans residues 117–136 (SSSSKQGTTKHTNTQITEAH). Glycyl lysine isopeptide (Lys-Gly) (interchain with G-Cter in SUMO2) cross-links involve residues Lys-137, Lys-142, Lys-146, Lys-165, Lys-174, Lys-196, Lys-214, Lys-223, and Lys-234. The homeobox 2 DNA-binding region spans 437–500 (ALQDRTQFSD…NRRRKYRLMG (64 aa)). Disordered stretches follow at residues 505–541 (PPRGGPADFSEQPESGSLSALTPGEEAGPEVGEDNDR) and 647–692 (KDQQ…SDSL). A compositionally biased stretch (polar residues) spans 676 to 692 (TSLSVSSLSEKNASDSL).

It localises to the nucleus. The chain is Highly divergent homeobox (Hdx) from Mus musculus (Mouse).